The chain runs to 245 residues: Geranylgeranylglyceryl phosphate synthase (245 aa).

Residues Asp24 and Ser54 each contribute to the Mg(2+) site. Sn-glycerol 1-phosphate contacts are provided by residues 172–178 (YLEAGSG), 203–204 (GG), and 225–226 (GT).

This sequence belongs to the GGGP/HepGP synthase family. Group II subfamily. Requires Mg(2+) as cofactor.

It localises to the cytoplasm. It catalyses the reaction sn-glycerol 1-phosphate + (2E,6E,10E)-geranylgeranyl diphosphate = sn-3-O-(geranylgeranyl)glycerol 1-phosphate + diphosphate. The protein operates within membrane lipid metabolism; glycerophospholipid metabolism. Prenyltransferase that catalyzes the transfer of the geranylgeranyl moiety of geranylgeranyl diphosphate (GGPP) to the C3 hydroxyl of sn-glycerol-1-phosphate (G1P). This reaction is the first ether-bond-formation step in the biosynthesis of archaeal membrane lipids. This is Geranylgeranylglyceryl phosphate synthase from Staphylothermus marinus (strain ATCC 43588 / DSM 3639 / JCM 9404 / F1).